The primary structure comprises 276 residues: Ribosomal RNA large subunit methyltransferase E (276 aa).

S-adenosyl-L-methionine contacts are provided by Gly52, Phe54, Asp72, Asp90, and Asp114. Lys154 acts as the Proton acceptor in catalysis. Over residues 203–249 (RAAPTANATPTPTSTSTSTPTSTSTPTSTSTSTPAPTLTQTQTQTPK) the composition is skewed to low complexity. Residues 203–276 (RAAPTANATP…AKTGASRRTR (74 aa)) are disordered. Over residues 265–276 (AKAKTGASRRTR) the composition is skewed to basic residues.

It belongs to the class I-like SAM-binding methyltransferase superfamily. RNA methyltransferase RlmE family.

It localises to the cytoplasm. It catalyses the reaction uridine(2552) in 23S rRNA + S-adenosyl-L-methionine = 2'-O-methyluridine(2552) in 23S rRNA + S-adenosyl-L-homocysteine + H(+). Specifically methylates the uridine in position 2552 of 23S rRNA at the 2'-O position of the ribose in the fully assembled 50S ribosomal subunit. This is Ribosomal RNA large subunit methyltransferase E from Anaeromyxobacter sp. (strain Fw109-5).